The following is a 506-amino-acid chain: MRAIISVYRKEGIDKLAKALQELGYEIVSTGGTAKYLREKGISVKEVSEITGFPEILEGRVKTLHPVVHGGILFRDWVEKDKEEIEKHGIKPIDVVVVNLYPFEEKLKEGLTDKDLMEFIDIGGPTLIRAAAKNFFRVVILVDPEDYDWVIEKLKKGNLTLQDRAYLAWKAFSHTAYYDGVISQAFKKLYSIDTFGKEEALPLKRMQKLRYGENPHQRGFLYENPLEDIGITKAQVLQGKEMSFNNYLDADSAVRLVAEFPNQTVCAIIKHNNPCGVALGSSVKEAFLRAKEADPVSAFGGIVAFNDKVDGETAKELTSMFLEVVIAPDYDEEALRELSRKKNLRVIRFFGFQHAFDVKKVSGGYLLQDEDTVLYEKLQVVTKREPTAEEMEDLLFAWKVVKHTKSNAVVIAKNGQTLGIGSGNVSRVDSLKCAINKAKEFGFDLKGAVVASEAFFPFRDSIDIMAKEGITAVIQPGGSIRDQEVIDACNEHGIAMIFTGLRHFKH.

The region spanning 1–142 is the MGS-like domain; it reads MRAIISVYRK…KNFFRVVILV (142 aa).

This sequence belongs to the PurH family.

The enzyme catalyses (6R)-10-formyltetrahydrofolate + 5-amino-1-(5-phospho-beta-D-ribosyl)imidazole-4-carboxamide = 5-formamido-1-(5-phospho-D-ribosyl)imidazole-4-carboxamide + (6S)-5,6,7,8-tetrahydrofolate. The catalysed reaction is IMP + H2O = 5-formamido-1-(5-phospho-D-ribosyl)imidazole-4-carboxamide. The protein operates within purine metabolism; IMP biosynthesis via de novo pathway; 5-formamido-1-(5-phospho-D-ribosyl)imidazole-4-carboxamide from 5-amino-1-(5-phospho-D-ribosyl)imidazole-4-carboxamide (10-formyl THF route): step 1/1. It functions in the pathway purine metabolism; IMP biosynthesis via de novo pathway; IMP from 5-formamido-1-(5-phospho-D-ribosyl)imidazole-4-carboxamide: step 1/1. In Aquifex aeolicus (strain VF5), this protein is Bifunctional purine biosynthesis protein PurH.